Reading from the N-terminus, the 493-residue chain is MAEEKALNDQMLARRQKLATIVDDLHLDPFGKRFERTAKAQELHDLYDNSTLETLESEQHEVVIAGRMIAKRGAGKVIFADFRDVSGKIQVYAKRDDLGENYPIIKRADLGDFLGIKGIIMKTEAGELTVLATELTHLTKALRPMPDKFHGIADVETRYRKRYLDLIANEESFKKFQLRSKIISAIRAYMDSQDFMEVETPILQTEAGGAAARPFITHHNALNIDMYMRIATELYLKRLVVGGFERVYEIGRIFRNEGMDPKHNPEFTTMETYAAYMDFTDVMDETEGIFKAAASVVSDDLKVTYQGTEIDLGSNFARKHMVDLIKEQTGIDFWQDMSVEAAQKLADDKHVKYEKYWGVGHIINAFFEEFVEDTLVQPTFVYGHPVEVSPLAKRNAEDSRFTDRFELFIMGSEYGNAFTELNDPIDQRARFEAQVAERENGNDEAENIDEDFIEALEYGMPPTGGLGIGIDRLVMLLTDSDTIRDVLLFPTMR.

Mg(2+) is bound by residues E406 and E413.

The protein belongs to the class-II aminoacyl-tRNA synthetase family. In terms of assembly, homodimer. It depends on Mg(2+) as a cofactor.

It is found in the cytoplasm. The enzyme catalyses tRNA(Lys) + L-lysine + ATP = L-lysyl-tRNA(Lys) + AMP + diphosphate. In Leuconostoc citreum (strain KM20), this protein is Lysine--tRNA ligase.